Here is an 88-residue protein sequence, read N- to C-terminus: Small ribosomal subunit protein bS20 (88 aa).

This sequence belongs to the bacterial ribosomal protein bS20 family.

Its function is as follows. Binds directly to 16S ribosomal RNA. The polypeptide is Small ribosomal subunit protein bS20 (Oenococcus oeni (strain ATCC BAA-331 / PSU-1)).